An 86-amino-acid polypeptide reads, in one-letter code: Large ribosomal subunit protein bL27 (86 aa).

Positions 1-10 (MAQKKGGGST) are enriched in gly residues. The tract at residues 1–21 (MAQKKGGGSTRNGRDSESKRL) is disordered.

Belongs to the bacterial ribosomal protein bL27 family.

This Bordetella petrii (strain ATCC BAA-461 / DSM 12804 / CCUG 43448) protein is Large ribosomal subunit protein bL27.